The chain runs to 372 residues: Cytochrome b (372 aa).

4 consecutive transmembrane segments (helical) span residues 25 to 45, 69 to 90, 105 to 125, and 170 to 190; these read FGSMLLTCLALQTMTGFFLAI, WIMQNIHAISASLFFICIYIHI, WLSGTTLLITLMATAFFGYVL, and FFALHFILPFAIISLSSIHII. Residues histidine 75 and histidine 89 each coordinate heme b. Positions 174 and 188 each coordinate heme b. An a ubiquinone-binding site is contributed by histidine 193. A run of 4 helical transmembrane segments spans residues 218-238, 280-300, 312-332, and 339-358; these read YKDMLMITSMITLLFIILSFS, LGGTLALLTSVAILTTVPFTH, LSQALFWTLIATFITITWTAS, and FVTISQTTSIIYFSFFITIP.

Belongs to the cytochrome b family. As to quaternary structure, the cytochrome bc1 complex contains 3 respiratory subunits (MT-CYB, CYC1 and UQCRFS1), 2 core proteins (UQCRC1 and UQCRC2) and probably 6 low-molecular weight proteins. The cofactor is heme b.

It localises to the mitochondrion inner membrane. Its function is as follows. Component of the ubiquinol-cytochrome c reductase complex (complex III or cytochrome b-c1 complex) that is part of the mitochondrial respiratory chain. The b-c1 complex mediates electron transfer from ubiquinol to cytochrome c. Contributes to the generation of a proton gradient across the mitochondrial membrane that is then used for ATP synthesis. The chain is Cytochrome b (MT-CYB) from Naja multifasciata (Burrowing cobra).